The sequence spans 270 residues: Glutamate 5-kinase (270 aa).

Residue K17 participates in ATP binding. Residues S57, D144, and N160 each coordinate substrate. Residues 180-181 (SD) and 222-228 (TGGMTSK) contribute to the ATP site.

Belongs to the glutamate 5-kinase family.

Its subcellular location is the cytoplasm. The catalysed reaction is L-glutamate + ATP = L-glutamyl 5-phosphate + ADP. Its pathway is amino-acid biosynthesis; L-proline biosynthesis; L-glutamate 5-semialdehyde from L-glutamate: step 1/2. Functionally, catalyzes the transfer of a phosphate group to glutamate to form L-glutamate 5-phosphate. The polypeptide is Glutamate 5-kinase (Lactococcus lactis subsp. lactis (strain IL1403) (Streptococcus lactis)).